A 212-amino-acid polypeptide reads, in one-letter code: Adenylate kinase (212 aa).

14–19 (GSGKGT) serves as a coordination point for ATP. Positions 34–63 (STGDLFRKKISEDSQFAAQIQNYLSSGSYV) are NMP. Residues threonine 35, arginine 40, 61 to 63 (SYV), 89 to 92 (GYPR), and glutamine 96 contribute to the AMP site. The tract at residues 126 to 163 (QRLFCQKCQKSYNLLLAKPKNELKCDLDSTDLITRNDD) is LID. Arginine 127 is an ATP binding site. Zn(2+) contacts are provided by cysteine 130 and cysteine 133. 136 to 137 (SY) serves as a coordination point for ATP. Residues cysteine 150 and aspartate 153 each contribute to the Zn(2+) site. The AMP site is built by arginine 160 and arginine 171. An ATP-binding site is contributed by glutamine 199.

The protein belongs to the adenylate kinase family. In terms of assembly, monomer.

It is found in the cytoplasm. The enzyme catalyses AMP + ATP = 2 ADP. It participates in purine metabolism; AMP biosynthesis via salvage pathway; AMP from ADP: step 1/1. Functionally, catalyzes the reversible transfer of the terminal phosphate group between ATP and AMP. Plays an important role in cellular energy homeostasis and in adenine nucleotide metabolism. The chain is Adenylate kinase from Mesomycoplasma hyopneumoniae (strain J / ATCC 25934 / NCTC 10110) (Mycoplasma hyopneumoniae).